The chain runs to 325 residues: Olfactory receptor 5T18 (325 aa).

At 1 to 22 (MRNITEATFFVLKGLTDNNELQ) the chain is on the extracellular side. N3 carries N-linked (GlcNAc...) asparagine glycosylation. The next 2 helical transmembrane spans lie at 23 to 43 (IILFLLFLAIYIFTLIGNVGL) and 44 to 64 (IILVVGDSQLHNPMYCFLSVL). At 65–97 (SSVDACYSTDITPNMLVGFMSKSKIISFYGCAT) the chain is on the extracellular side. Residues C95 and C187 are joined by a disulfide bond. The chain crosses the membrane as a helical span at residues 98-118 (QMFLAVTFGTTECFLLAAMAY). Residues 119-139 (DRYVAIHDPLLYAVSMSPRVY) are Cytoplasmic-facing. The helical transmembrane segment at 140 to 160 (IPLIIASYAGGIVHAIIHTVA) threads the bilayer. Residues 161-194 (TFSLSFCRSNEVKHIFCDIPPLLAISCSETYVNE) are Extracellular-facing. Residues 195 to 215 (LLLFFFVSFIELVTILIVLVS) form a helical membrane-spanning segment. Residues 216-234 (YAFILLSILKMNSSEGRRK) are Cytoplasmic-facing. Residues 235–255 (VFSTCGAHLTAVSIYYGTILF) traverse the membrane as a helical segment. The Extracellular segment spans residues 256 to 269 (MYVRPSSNYSLEHD). A helical membrane pass occupies residues 270 to 290 (MIVSTFYTIGIPMLNPIIYSL). At 291 to 325 (RNKDVKEAMKRVLRKKINIKHRIKKLNDFSVFLMP) the chain is on the cytoplasmic side.

This sequence belongs to the G-protein coupled receptor 1 family.

Its subcellular location is the cell membrane. Its function is as follows. Potential odorant receptor. The chain is Olfactory receptor 5T18 from Mus musculus (Mouse).